Reading from the N-terminus, the 327-residue chain is DNA-directed RNA polymerase subunit alpha (327 aa).

The alpha N-terminal domain (alpha-NTD) stretch occupies residues 1 to 233 (MVREKVKVST…NLFIPFLHVE (233 aa)). The alpha C-terminal domain (alpha-CTD) stretch occupies residues 264–327 (TKELAFQYIF…KKILDILEKK (64 aa)).

This sequence belongs to the RNA polymerase alpha chain family. In terms of assembly, in plastids the minimal PEP RNA polymerase catalytic core is composed of four subunits: alpha, beta, beta', and beta''. When a (nuclear-encoded) sigma factor is associated with the core the holoenzyme is formed, which can initiate transcription.

It localises to the plastid. It is found in the chloroplast. The enzyme catalyses RNA(n) + a ribonucleoside 5'-triphosphate = RNA(n+1) + diphosphate. In terms of biological role, DNA-dependent RNA polymerase catalyzes the transcription of DNA into RNA using the four ribonucleoside triphosphates as substrates. In Capsella bursa-pastoris (Shepherd's purse), this protein is DNA-directed RNA polymerase subunit alpha.